Reading from the N-terminus, the 150-residue chain is Transcriptional repressor NrdR (150 aa).

Residues 1–26 (MKCPFCGNSDSKVVDSRPDKGGSGIR) are disordered. Residues 3–34 (CPFCGNSDSKVVDSRPDKGGSGIRRRRECEQC) fold into a zinc finger. One can recognise an ATP-cone domain in the interval 49 to 139 (PLVLKKDGRR…VYRSFRDINE (91 aa)).

The protein belongs to the NrdR family. The cofactor is Zn(2+).

Its function is as follows. Negatively regulates transcription of bacterial ribonucleotide reductase nrd genes and operons by binding to NrdR-boxes. This is Transcriptional repressor NrdR from Pelobacter propionicus (strain DSM 2379 / NBRC 103807 / OttBd1).